We begin with the raw amino-acid sequence, 281 residues long: 4-diphosphocytidyl-2-C-methyl-D-erythritol kinase (281 aa).

The active site involves lysine 11. 92–102 (LVSAGLAGGSA) contacts ATP. Residue aspartate 132 is part of the active site.

It belongs to the GHMP kinase family. IspE subfamily.

The catalysed reaction is 4-CDP-2-C-methyl-D-erythritol + ATP = 4-CDP-2-C-methyl-D-erythritol 2-phosphate + ADP + H(+). The protein operates within isoprenoid biosynthesis; isopentenyl diphosphate biosynthesis via DXP pathway; isopentenyl diphosphate from 1-deoxy-D-xylulose 5-phosphate: step 3/6. Functionally, catalyzes the phosphorylation of the position 2 hydroxy group of 4-diphosphocytidyl-2C-methyl-D-erythritol. The polypeptide is 4-diphosphocytidyl-2-C-methyl-D-erythritol kinase (Ehrlichia ruminantium (strain Welgevonden)).